We begin with the raw amino-acid sequence, 334 residues long: Geranylgeranyl pyrophosphate synthase idtG (334 aa).

Residues K49, R52, and H81 each coordinate isopentenyl diphosphate. Positions 88 and 92 each coordinate Mg(2+). R97 is a binding site for dimethylallyl diphosphate. R98 contributes to the isopentenyl diphosphate binding site. Residues K175, T176, and Q209 each contribute to the dimethylallyl diphosphate site. Residue D212 participates in Mg(2+) binding. N216, K226, and K236 together coordinate dimethylallyl diphosphate.

The protein belongs to the FPP/GGPP synthase family. Requires Mg(2+) as cofactor.

It carries out the reaction isopentenyl diphosphate + dimethylallyl diphosphate = (2E)-geranyl diphosphate + diphosphate. The catalysed reaction is isopentenyl diphosphate + (2E)-geranyl diphosphate = (2E,6E)-farnesyl diphosphate + diphosphate. The enzyme catalyses isopentenyl diphosphate + (2E,6E)-farnesyl diphosphate = (2E,6E,10E)-geranylgeranyl diphosphate + diphosphate. It functions in the pathway secondary metabolite biosynthesis. Geranylgeranyl pyrophosphate synthase; part of the gene cluster that mediates the biosynthesis of paspalitrems, indole-diterpene (IDT) mycotoxins that are potent tremorgens in mammals. The geranylgeranyl diphosphate (GGPP) synthase idtG is proposed to catalyze the first step in IDT biosynthesis via catalysis of a series of iterative condensations of isopentenyl diphosphate (IPP) with dimethylallyl diphosphate (DMAPP), geranyl diphosphate (GPP), and farnesyl diphosphate (FPP), to form GGPP. Condensation of indole-3-glycerol phosphate with GGPP by the prenyltransferase idtC then forms 3-geranylgeranylindole (3-GGI). Epoxidation of the two terminal alkenes of the geranylgeranyl moiety by the FAD-dependent monooxygenase idtM, and cyclization by the terpene cyclase idtB then leads to the production of paspaline. The cytochrome P450 monooxygenase idtP then catalyzes oxidative elimination of the pendant methyl group at C-12 of paspaline and generates the C-10 ketone to yield 13-desoxypaxilline. The cytochrome P450 monooxygenase idtQ may catalyze the C-13 oxidation of 13-desoxypaxilline to afford paxilline. Considering that both paspalicine and paxilline were detected in C.paspali, idtQ also catalyzes the formation of paspalinine from 13-desoxypaxilline via paspalicine as an intermediate. Finally, the alpha-prenyltransferase idtF prenylates paspalinine at the C-20 or the C-21 positions to yield paspalitrems A and C, respectively. The hydroxylation of paspalitrem A at C-32 by a still unknown oxidase affords paspalitrem B. The chain is Geranylgeranyl pyrophosphate synthase idtG from Claviceps paspali (Rye ergot fungus).